The primary structure comprises 171 residues: Large ribosomal subunit protein uL10 (171 aa).

It belongs to the universal ribosomal protein uL10 family. In terms of assembly, part of the ribosomal stalk of the 50S ribosomal subunit. The N-terminus interacts with L11 and the large rRNA to form the base of the stalk. The C-terminus forms an elongated spine to which L12 dimers bind in a sequential fashion forming a multimeric L10(L12)X complex.

Its function is as follows. Forms part of the ribosomal stalk, playing a central role in the interaction of the ribosome with GTP-bound translation factors. This chain is Large ribosomal subunit protein uL10 (rplJ), found in Lactococcus lactis subsp. lactis (strain IL1403) (Streptococcus lactis).